Here is a 238-residue protein sequence, read N- to C-terminus: Cadherin-2 (238 aa).

3 consecutive Cadherin domains span residues 1-46 (TKPL…RPEF), 47-161 (LHQV…PPEF), and 162-238 (TAMT…RMFV). Residues 1-238 (TKPLDRELIA…IDFETNRMFV (238 aa)) are Extracellular-facing. Positions 5, 7, 38, 39, 40, 41, and 42 each coordinate Ca(2+). Asn-52 is a glycosylation site (N-linked (GlcNAc...) asparagine). Residues Asp-72, Asp-74, and Asn-80 each coordinate Ca(2+). Asn-104 carries an N-linked (GlcNAc...) asparagine glycan. Asp-132 serves as a coordination point for Ca(2+). N-linked (GlcNAc...) asparagine glycosylation is present at Asn-181.

Homodimer (via extracellular region). Can also form heterodimers with other cadherins (via extracellular region). Dimerization occurs in trans, i.e. with a cadherin chain from another cell. Interacts with CDCP1. Interacts with PCDH8; this complex may also include TAOK2. The interaction with PCDH8 may lead to internalization through TAOK2/p38 MAPK pathway. Identified in a complex containing FGFR4, NCAM1, CDH2, PLCG1, FRS2, SRC, SHC1, GAP43 and CTTN. May interact with OBSCN (via protein kinase domain 2). In terms of processing, cleaved by MMP24. Ectodomain cleavage leads to the generation of a soluble 90 kDa N-terminal soluble fragment and a 45 kDa membrane-bound C-terminal fragment 1 (CTF1), which is further cleaved by gamma-secretase into a 35 kDa. Cleavage in neural stem cells by MMP24 affects CDH2-mediated anchorage of neural stem cells to ependymocytes in the adult subependymal zone, leading to modulate neural stem cell quiescence. Post-translationally, may be phosphorylated by OBSCN.

It is found in the cell membrane. The protein resides in the sarcolemma. The protein localises to the cell junction. Its subcellular location is the cell surface. It localises to the desmosome. It is found in the adherens junction. In terms of biological role, calcium-dependent cell adhesion protein; preferentially mediates homotypic cell-cell adhesion by dimerization with a CDH2 chain from another cell. Cadherins may thus contribute to the sorting of heterogeneous cell types. Acts as a regulator of neural stem cells quiescence by mediating anchorage of neural stem cells to ependymocytes in the adult subependymal zone: upon cleavage by MMP24, CDH2-mediated anchorage is affected, leading to modulate neural stem cell quiescence. Plays a role in cell-to-cell junction formation between pancreatic beta cells and neural crest stem (NCS) cells, promoting the formation of processes by NCS cells. Required for proper neurite branching. Required for pre- and postsynaptic organization. CDH2 may be involved in neuronal recognition mechanism. In hippocampal neurons, may regulate dendritic spine density. This is Cadherin-2 (CDH2) from Cricetulus griseus (Chinese hamster).